Here is a 251-residue protein sequence, read N- to C-terminus: Triosephosphate isomerase (251 aa).

Position 12 to 14 (12 to 14 (NWK)) interacts with substrate. The active-site Electrophile is the His99. The Proton acceptor role is filled by Glu169. Substrate-binding positions include Gly175, Ser214, and 235-236 (GG).

The protein belongs to the triosephosphate isomerase family. Homodimer.

The protein localises to the cytoplasm. The catalysed reaction is D-glyceraldehyde 3-phosphate = dihydroxyacetone phosphate. The protein operates within carbohydrate biosynthesis; gluconeogenesis. It functions in the pathway carbohydrate degradation; glycolysis; D-glyceraldehyde 3-phosphate from glycerone phosphate: step 1/1. Its function is as follows. Involved in the gluconeogenesis. Catalyzes stereospecifically the conversion of dihydroxyacetone phosphate (DHAP) to D-glyceraldehyde-3-phosphate (G3P). This is Triosephosphate isomerase from Bradyrhizobium sp. (strain ORS 278).